We begin with the raw amino-acid sequence, 632 residues long: Actin-related protein 8 (632 aa).

Over residues 1-30 (MTQAEREQENGKEKEKEREKEKEKEKEQRG) the composition is skewed to basic and acidic residues. The segment at 1-43 (MTQAEREQENGKEKEKEREKEKEKEKEQRGIKRPIAPPVIPEP) is disordered. 288 to 291 (DVGD) serves as a coordination point for ATP. 2 disordered regions span residues 410–429 (MTSLQHRSQGDPEDPHDEHY) and 434–494 (QSKQ…GGAE). Low complexity predominate over residues 434-443 (QSKQDQSSKA).

This sequence belongs to the actin family. ARP8 subfamily. In terms of assembly, component of the chromatin remodeling INO80 complex; specifically part of a complex module associated with the DBINO domain of INO80. Exists as monomers and dimers, but the dimer is most probably the biologically relevant form required for stable interactions with histones that exploits the twofold symmetry of the nucleosome core.

It localises to the nucleus. Its subcellular location is the chromosome. Functionally, plays an important role in the functional organization of mitotic chromosomes. Exhibits low basal ATPase activity, and unable to polymerize. Proposed core component of the chromatin remodeling INO80 complex which is involved in transcriptional regulation, DNA replication and probably DNA repair. Required for the recruitment of INO80 (and probably the INO80 complex) to sites of DNA damage Strongly prefer nucleosomes and H3-H4 tetramers over H2A-H2B dimers, suggesting it may act as a nucleosome recognition module within the complex. The polypeptide is Actin-related protein 8 (actr8) (Salmo salar (Atlantic salmon)).